Consider the following 316-residue polypeptide: Putative metal-binding protein TP_0034 (316 aa).

Positions 1 to 19 (MQRCSVVAALAGVVFLAQA) are cleaved as a signal peptide. Residues histidine 68, histidine 146, and histidine 210 each coordinate a divalent metal cation.

It belongs to the bacterial solute-binding protein 9 family.

It is found in the periplasm. Part of an ATP-binding cassette (ABC) transport system involved in metal import. Binds a metal with high affinity and specificity and delivers it to the membrane permease for translocation into the cytoplasm. The protein is Putative metal-binding protein TP_0034 of Treponema pallidum (strain Nichols).